A 608-amino-acid polypeptide reads, in one-letter code: Albumin (608 aa).

The N-terminal stretch at 1-18 (MKWVTFISLLFLFSSAYS) is a signal peptide. Positions 19–24 (RGVFRR) are excised as a propeptide. Albumin domains are found at residues 19–210 (RGVF…DALE), 211–403 (GKSL…EFQP), and 404–601 (LVDE…KLVE). His-27 is a Cu cation binding site. Phosphoserine is present on Ser-29. Residues Glu-30 and Asp-37 each coordinate Ca(2+). A disulfide bridge connects residues Cys-77 and Cys-86. Phosphoserine occurs at positions 82 and 89. His-91 is a Zn(2+) binding site. 6 disulfides stabilise this stretch: Cys-99/Cys-115, Cys-114/Cys-125, Cys-148/Cys-193, Cys-192/Cys-201, Cys-224/Cys-270, and Cys-269/Cys-277. Phosphothreonine is present on Thr-107. Residue Lys-229 is modified to N6-succinyllysine. Position 268 (Glu-268) interacts with Ca(2+). His-271 and Asp-273 together coordinate Zn(2+). Asp-273, Glu-276, Asp-279, and Asp-283 together coordinate Ca(2+). Disulfide bonds link Cys-289/Cys-303, Cys-302/Cys-313, Cys-340/Cys-385, Cys-384/Cys-393, Cys-416/Cys-462, Cys-461/Cys-472, Cys-485/Cys-501, and Cys-500/Cys-511. Position 297 is a phosphoserine (Ser-297). Ser-443 is subject to Phosphoserine. Phosphothreonine is present on residues Thr-444 and Thr-446. Lys-460 is modified (N6-succinyllysine). At Ser-513 the chain carries Phosphoserine. 2 cysteine pairs are disulfide-bonded: Cys-538-Cys-583 and Cys-582-Cys-591. N6-methyllysine is present on Lys-558. Position 570 is a phosphothreonine (Thr-570). The residue at position 588 (Lys-588) is an N6-succinyllysine.

This sequence belongs to the ALB/AFP/VDB family. In terms of assembly, interacts with FCGRT; this interaction regulates ALB homeostasis. Interacts with TASOR. In plasma, occurs in a covalently-linked complex with chromophore-bound alpha-1-microglobulin; this interaction does not prevent fatty acid binding to ALB. Post-translationally, phosphorylated by FAM20C in the extracellular medium. As to expression, plasma.

It localises to the secreted. Binds water, Ca(2+), Na(+), K(+), fatty acids, hormones, bilirubin and drugs. Its main function is the regulation of the colloidal osmotic pressure of blood. Major zinc transporter in plasma, typically binds about 80% of all plasma zinc. Major calcium and magnesium transporter in plasma, binds approximately 45% of circulating calcium and magnesium in plasma. Potentially has more than two calcium-binding sites and might additionally bind calcium in a non-specific manner. The shared binding site between zinc and calcium at residue Asp-273 suggests a crosstalk between zinc and calcium transport in the blood. The rank order of affinity is zinc &gt; calcium &gt; magnesium. Binds to the bacterial siderophore enterobactin and inhibits enterobactin-mediated iron uptake of E.coli from ferric transferrin, and may thereby limit the utilization of iron and growth of enteric bacteria such as E.coli. Does not prevent iron uptake by the bacterial siderophore aerobactin. The chain is Albumin (ALB) from Oryctolagus cuniculus (Rabbit).